A 252-amino-acid chain; its full sequence is 5-oxoprolinase subunit A (252 aa).

This sequence belongs to the LamB/PxpA family. As to quaternary structure, forms a complex composed of PxpA, PxpB and PxpC.

The catalysed reaction is 5-oxo-L-proline + ATP + 2 H2O = L-glutamate + ADP + phosphate + H(+). Functionally, catalyzes the cleavage of 5-oxoproline to form L-glutamate coupled to the hydrolysis of ATP to ADP and inorganic phosphate. This is 5-oxoprolinase subunit A from Kocuria rhizophila (strain ATCC 9341 / DSM 348 / NBRC 103217 / DC2201).